The chain runs to 279 residues: Tumor necrosis factor ligand superfamily member 6 (279 aa).

The Cytoplasmic segment spans residues 1–78 (MQQPMNYPCP…PLKKKDHNTN (78 aa)). A disordered region spans residues 30–70 (FPCPSCGPRGPDQRRPPPPPPPVSPLPPPSQPLPLPPLTPL). A compositionally biased stretch (pro residues) spans 45 to 68 (PPPPPPPVSPLPPPSQPLPLPPLT). The chain crosses the membrane as a helical; Signal-anchor for type II membrane protein span at residues 79 to 100 (LWLPVVFFMVLVALVGMGLGMY). At 101-279 (QLFHLQKELA…SKTFFGLYKL (179 aa)) the chain is on the extracellular side. An N-linked (GlcNAc...) asparagine glycan is attached at N117. Over residues 126–135 (EKQIANPSTP) the composition is skewed to polar residues. A disordered region spans residues 126-150 (EKQIANPSTPSEKKEPRSVAHLTGN). The THD domain occupies 143–279 (SVAHLTGNPH…SKTFFGLYKL (137 aa)). N182 is a glycosylation site (N-linked (GlcNAc...) asparagine). C200 and C231 form a disulfide bridge. N248 and N258 each carry an N-linked (GlcNAc...) asparagine glycan.

This sequence belongs to the tumor necrosis factor family. As to quaternary structure, homotrimer. Interacts with ARHGAP9, BAIAP2L1, BTK, CACNB3, CACNB4, CRK, DLG2, DNMBP, DOCK4, EPS8L3, FGR, FYB1, FYN, HCK, ITK, ITSN2, KALRN, LYN, MACC1, MIA, MPP4, MYO15A, NCF1, NCK1, NCK2, NCKIPSD, OSTF1, PIK3R1, PSTPIP1, RIMBP3C, SAMSN1, SH3GL3, SH3PXD2B, SH3PXD2A, SH3RF2, SKAP2, SNX33, SNX9, SORBS3, SPTA1, SRC, SRGAP1, SRGAP2, SRGAP3, TEC, TJP3 and YES1. In terms of processing, the soluble form derives from the membrane form by proteolytic processing. The membrane-bound form undergoes two successive intramembrane proteolytic cleavages. The first one is processed by ADAM10 producing an N-terminal fragment, which lacks the receptor-binding extracellular domain. This ADAM10-processed FasL (FAsL APL) remnant form is still membrane anchored and further processed by SPPL2A that liberates the FasL intracellular domain (FasL ICD). FasL shedding by ADAM10 is a prerequisite for subsequent intramembrane cleavage by SPPL2A in T-cells. Phosphorylated by FGR on tyrosine residues; this is required for ubiquitination and subsequent internalization. Post-translationally, N-glycosylated. Glycosylation enhances apoptotic activity. In terms of processing, monoubiquitinated. As to expression, expressed in T-cells. Expressed in natural killer cells.

It is found in the cell membrane. The protein localises to the cytoplasmic vesicle lumen. The protein resides in the lysosome lumen. It localises to the secreted. Its subcellular location is the nucleus. Its function is as follows. Cytokine that binds to TNFRSF6/FAS, a receptor that transduces the apoptotic signal into cells. Involved in cytotoxic T-cell-mediated apoptosis, natural killer cell-mediated apoptosis and in T-cell development. Initiates fratricidal/suicidal activation-induced cell death (AICD) in antigen-activated T-cells contributing to the termination of immune responses. TNFRSF6/FAS-mediated apoptosis also has a role in the induction of peripheral tolerance. Binds to TNFRSF6B/DcR3, a decoy receptor that blocks apoptosis. In terms of biological role, induces FAS-mediated activation of NF-kappa-B, initiating non-apoptotic signaling pathways. Can induce apoptosis but does not appear to be essential for this process. Cytoplasmic form induces gene transcription inhibition. In Mus musculus (Mouse), this protein is Tumor necrosis factor ligand superfamily member 6 (Faslg).